A 941-amino-acid polypeptide reads, in one-letter code: Lysine-specific demethylase 7A (941 aa).

The PHD-type zinc finger occupies 37–88 (PVYCVCRQPYDVNRFMIECDICKDWFHGSCVGVEEHHAVDIDLYHCPNCAVL). Residues 97–114 (RRNWHRHDYTEIDDGSKP) form a linker region. Residues 230–386 (FSDTKMSELV…MQLRCYEMEK (157 aa)) enclose the JmjC domain. Threonine 279 provides a ligand contact to substrate. Residues histidine 282 and aspartate 284 each contribute to the Fe cation site. Substrate is bound at residue lysine 299. Histidine 354 is a binding site for Fe cation. 3 disordered regions span residues 597–633 (QSLY…EHEE), 677–700 (TTEE…KEES), and 819–921 (QDLS…MATA). A Phosphoserine modification is found at serine 604. Basic and acidic residues-rich tracts occupy residues 618 to 633 (MKIE…EHEE) and 685 to 700 (GDEK…KEES). Over residues 834-876 (SEISQRVQSRNYVDSSGSSLQNGKYMQNSNLTSGACQISNGSL) the composition is skewed to polar residues.

It belongs to the JHDM1 histone demethylase family. JHDM1D subfamily. Fe(2+) is required as a cofactor.

The protein localises to the nucleus. It carries out the reaction N(6),N(6)-dimethyl-L-lysyl(9)-[histone H3] + 2 2-oxoglutarate + 2 O2 = L-lysyl(9)-[histone H3] + 2 formaldehyde + 2 succinate + 2 CO2. It catalyses the reaction N(6),N(6)-dimethyl-L-lysyl(27)-[histone H3] + 2 2-oxoglutarate + 2 O2 = L-lysyl(27)-[histone H3] + 2 formaldehyde + 2 succinate + 2 CO2. The enzyme catalyses N(6),N(6)-dimethyl-L-lysyl(36)-[histone H3] + 2-oxoglutarate + O2 = N(6)-methyl-L-lysyl(36)-[histone H3] + formaldehyde + succinate + CO2. The catalysed reaction is N(6)-methyl-L-lysyl(20)-[histone H4] + 2-oxoglutarate + O2 = L-lysyl(20)-[histone H4] + formaldehyde + succinate + CO2. Histone demethylase required for brain development. Specifically demethylates dimethylated 'Lys-9', 'Lys-27' and 'Lys-36' (H3K9me2, H3K27me2, H3K36me2, respectively) of histone H3 and monomethylated histone H4 'Lys-20' residue (H4K20Me1), thereby playing a central role in histone code. Specifically binds trimethylated 'Lys-4' of histone H3 (H3K4me3), affecting histone demethylase specificity: in presence of H3K4me3, it has no demethylase activity toward H3K9me2, while it has high activity toward H3K27me2. Demethylates H3K9me2 in absence of H3K4me3. Has activity toward H4K20Me1 only when nucleosome is used as a substrate and when not histone octamer is used as substrate. The chain is Lysine-specific demethylase 7A (KDM7A) from Homo sapiens (Human).